The primary structure comprises 499 residues: Cytochrome P450 76T24 (499 aa).

Residues 3–23 (VDILLSLVLAFFGWAAIYFLT) form a helical membrane-spanning segment. 4 N-linked (GlcNAc...) asparagine glycosylation sites follow: asparagine 55, asparagine 76, asparagine 279, and asparagine 284. Cysteine 442 is a heme binding site.

This sequence belongs to the cytochrome P450 family.

The protein localises to the membrane. This chain is Cytochrome P450 76T24, found in Catharanthus roseus (Madagascar periwinkle).